A 150-amino-acid chain; its full sequence is Protein SLM6 (150 aa).

Topologically, residues 1–76 (MCSRFSSTSL…SLLRSGVFPS (76 aa)) are extracellular. A helical membrane pass occupies residues 77–97 (WLFCMFSSILALAISNSFFFF). Residues 98 to 104 (SSNACFS) lie on the Cytoplasmic side of the membrane. The helical transmembrane segment at 105-125 (LLFNSFLVTGFSFSADLLVLA) threads the bilayer. The Extracellular portion of the chain corresponds to 126 to 150 (AAADTLESNVSNDIGGNCATRLFKL).

It is found in the membrane. The polypeptide is Protein SLM6 (Saccharomyces cerevisiae (strain ATCC 204508 / S288c) (Baker's yeast)).